The sequence spans 128 residues: Fluoride-specific ion channel FluC (128 aa).

4 consecutive transmembrane segments (helical) span residues 5 to 25, 32 to 52, 70 to 90, and 106 to 126; these read ALVA…SMVI, TFPW…GLFA, FFMV…LQTL, and VGSV…ATII. Na(+)-binding residues include Gly77 and Thr80.

This sequence belongs to the fluoride channel Fluc/FEX (TC 1.A.43) family.

The protein resides in the cell inner membrane. The catalysed reaction is fluoride(in) = fluoride(out). Its activity is regulated as follows. Na(+) is not transported, but it plays an essential structural role and its presence is essential for fluoride channel function. Its function is as follows. Fluoride-specific ion channel. Important for reducing fluoride concentration in the cell, thus reducing its toxicity. In Paramagnetospirillum magneticum (strain ATCC 700264 / AMB-1) (Magnetospirillum magneticum), this protein is Fluoride-specific ion channel FluC.